The following is a 306-amino-acid chain: MTQEFAVTTPETTQTVGTARVKRGMAEMLKGGVIMDVVTPEQAKIAEDAGAVAVMALERVPADIRAQGGVSRMSDPDMIDGIINAVSIPVMAKARIGHFVEAQILQSLGVDYIDESEVLTPADYTNHIDKWQFTVPFVCGATNLGEALRRITEGAAMIRSKGEAGTGDVSNATTHMRKIRQEIRKLAALPEDELYVAAKELQAPYELVREVAETGKLPVVLFTAGGIATPADAAMMMQLGAEGVFVGSGIFKSGNPAQRAEAIVKATTFYDDPDVLAKVSRGLGEAMVGINVEEIPQPHRLAERGW.

A D-ribose 5-phosphate-binding site is contributed by aspartate 36. Lysine 93 (schiff-base intermediate with D-ribose 5-phosphate) is an active-site residue. Glycine 165 is a D-ribose 5-phosphate binding site. D-glyceraldehyde 3-phosphate is bound at residue arginine 177. D-ribose 5-phosphate-binding positions include glycine 226 and 247–248 (GS).

This sequence belongs to the PdxS/SNZ family. As to quaternary structure, in the presence of PdxT, forms a dodecamer of heterodimers.

The catalysed reaction is aldehydo-D-ribose 5-phosphate + D-glyceraldehyde 3-phosphate + L-glutamine = pyridoxal 5'-phosphate + L-glutamate + phosphate + 3 H2O + H(+). It participates in cofactor biosynthesis; pyridoxal 5'-phosphate biosynthesis. Catalyzes the formation of pyridoxal 5'-phosphate from ribose 5-phosphate (RBP), glyceraldehyde 3-phosphate (G3P) and ammonia. The ammonia is provided by the PdxT subunit. Can also use ribulose 5-phosphate and dihydroxyacetone phosphate as substrates, resulting from enzyme-catalyzed isomerization of RBP and G3P, respectively. The sequence is that of Pyridoxal 5'-phosphate synthase subunit PdxS from Nocardia farcinica (strain IFM 10152).